Consider the following 408-residue polypeptide: Putative mannan endo-1,4-beta-mannosidase P (408 aa).

Residues 1–23 (MKCLCFIVLLAIVIAQSYVGVEA) form the signal peptide. An N-linked (GlcNAc...) asparagine glycan is attached at Asn73. Substrate-binding residues include Trp85 and Asn201. The active-site Proton donor is Glu202. The active-site Nucleophile is the Glu322. Trp364 contacts substrate.

Belongs to the glycosyl hydrolase 5 (cellulase A) family.

It localises to the secreted. The enzyme catalyses Random hydrolysis of (1-&gt;4)-beta-D-mannosidic linkages in mannans, galactomannans and glucomannans.. This is Putative mannan endo-1,4-beta-mannosidase P (MANP) from Arabidopsis thaliana (Mouse-ear cress).